Here is a 115-residue protein sequence, read N- to C-terminus: Large ribosomal subunit protein bL20 (115 aa).

This sequence belongs to the bacterial ribosomal protein bL20 family.

Functionally, binds directly to 23S ribosomal RNA and is necessary for the in vitro assembly process of the 50S ribosomal subunit. It is not involved in the protein synthesizing functions of that subunit. This is Large ribosomal subunit protein bL20 from Chlorobium limicola (strain DSM 245 / NBRC 103803 / 6330).